Reading from the N-terminus, the 321-residue chain is Ribosomal RNA small subunit methyltransferase H (321 aa).

S-adenosyl-L-methionine-binding positions include 29–31 (GGH), D48, Y76, D97, and Q104. The disordered stretch occupies residues 277-321 (LTRGAEPASETEKAENPRAASVRLRAVERTAPNPDHTRKPTGGAS).

This sequence belongs to the methyltransferase superfamily. RsmH family.

The protein resides in the cytoplasm. It catalyses the reaction cytidine(1402) in 16S rRNA + S-adenosyl-L-methionine = N(4)-methylcytidine(1402) in 16S rRNA + S-adenosyl-L-homocysteine + H(+). Functionally, specifically methylates the N4 position of cytidine in position 1402 (C1402) of 16S rRNA. The chain is Ribosomal RNA small subunit methyltransferase H from Frankia casuarinae (strain DSM 45818 / CECT 9043 / HFP020203 / CcI3).